Reading from the N-terminus, the 394-residue chain is Flavohemoprotein (394 aa).

Residues 1–136 (MLSENTINIV…LANVFIQREE (136 aa)) enclose the Globin domain. His-85 provides a ligand contact to heme b. Residues Tyr-95 and Glu-135 each act as charge relay system in the active site. Residues 147 to 394 (GGWRGLREFE…YECFGPHKVV (248 aa)) are reductase. The 106-residue stretch at 150–255 (RGLREFELVE…AAPAGDFFLD (106 aa)) folds into the FAD-binding FR-type domain. FAD-binding positions include Tyr-188 and 204–207 (RQYS). An NADP(+)-binding site is contributed by 268–273 (GVGLTP). Position 387–390 (387–390 (CFGP)) interacts with FAD.

The protein belongs to the globin family. Two-domain flavohemoproteins subfamily. In the C-terminal section; belongs to the flavoprotein pyridine nucleotide cytochrome reductase family. Heme b is required as a cofactor. It depends on FAD as a cofactor.

The catalysed reaction is 2 nitric oxide + NADPH + 2 O2 = 2 nitrate + NADP(+) + H(+). The enzyme catalyses 2 nitric oxide + NADH + 2 O2 = 2 nitrate + NAD(+) + H(+). Is involved in NO detoxification in an aerobic process, termed nitric oxide dioxygenase (NOD) reaction that utilizes O(2) and NAD(P)H to convert NO to nitrate, which protects the bacterium from various noxious nitrogen compounds. Therefore, plays a central role in the inducible response to nitrosative stress. The protein is Flavohemoprotein of Vibrio vulnificus (strain CMCP6).